We begin with the raw amino-acid sequence, 216 residues long: uncharacterized protein (216 aa).

Residues 1–21 (MTIVHFVGSLFFFFFFSYIFF) traverse the membrane as a helical segment.

The protein localises to the membrane. This is an uncharacterized protein from Saccharomyces cerevisiae (strain ATCC 204508 / S288c) (Baker's yeast).